The following is a 386-amino-acid chain: Ribonuclease D (386 aa).

In terms of domain architecture, 3'-5' exonuclease spans 3–174 (HTITTTDELA…EIYEYLSAEL (172 aa)). Positions 213 to 294 (SGRVVAIAQQ…ARGMSVPNSE (82 aa)) constitute an HRDC domain.

This sequence belongs to the RNase D family. A divalent metal cation serves as cofactor.

The protein localises to the cytoplasm. It carries out the reaction Exonucleolytic cleavage that removes extra residues from the 3'-terminus of tRNA to produce 5'-mononucleotides.. Its function is as follows. Exonuclease involved in the 3' processing of various precursor tRNAs. Initiates hydrolysis at the 3'-terminus of an RNA molecule and releases 5'-mononucleotides. The chain is Ribonuclease D from Jannaschia sp. (strain CCS1).